The primary structure comprises 372 residues: Glutamate 5-kinase (372 aa).

An ATP-binding site is contributed by Lys14. 3 residues coordinate substrate: Ser54, Asp141, and Asn153. Residue 173–174 (TD) participates in ATP binding. The region spanning 280–358 (RGHVVIDAGA…GEIETVLGYM (79 aa)) is the PUA domain.

This sequence belongs to the glutamate 5-kinase family.

It is found in the cytoplasm. It carries out the reaction L-glutamate + ATP = L-glutamyl 5-phosphate + ADP. Its pathway is amino-acid biosynthesis; L-proline biosynthesis; L-glutamate 5-semialdehyde from L-glutamate: step 1/2. In terms of biological role, catalyzes the transfer of a phosphate group to glutamate to form L-glutamate 5-phosphate. This is Glutamate 5-kinase from Burkholderia mallei (strain NCTC 10229).